We begin with the raw amino-acid sequence, 568 residues long: Hexose transporter 1 (568 aa).

The Cytoplasmic segment spans residues M1–S32. A helical membrane pass occupies residues C33 to F53. Residues N54–G86 lie on the Extracellular side of the membrane. C72 and C83 are oxidised to a cystine. The chain crosses the membrane as a helical span at residues L87 to L107. Residues G108 to S119 lie on the Cytoplasmic side of the membrane. Residues L120–F140 traverse the membrane as a helical segment. Residues P141–T142 lie on the Extracellular side of the membrane. A helical membrane pass occupies residues L143 to M163. Over Y164 to Q182 the chain is Cytoplasmic. Q182 lines the alpha-D-glucose pocket. Residue Q182 participates in beta-D-glucose binding. Residues L183 to P203 traverse the membrane as a helical segment. Topologically, residues A204–R220 are extracellular. The chain crosses the membrane as a helical span at residues V221–F241. The Cytoplasmic portion of the chain corresponds to P242–S306. The helical transmembrane segment at V307 to V327 threads the bilayer. Alpha-D-glucose contacts are provided by Q318, Q319, and N324. Position 318 (Q318) interacts with beta-D-glucose. N324 is a binding site for beta-D-glucose. The Extracellular portion of the chain corresponds to A328–T345. Residues G346–V366 traverse the membrane as a helical segment. Residue N355 coordinates beta-D-glucose. Topologically, residues D367 to L374 are cytoplasmic. A helical membrane pass occupies residues L375 to V395. The Extracellular portion of the chain corresponds to D396–T406. A helical transmembrane segment spans residues V407–I427. Position 426 (W426) interacts with alpha-D-glucose. At Y428 to S443 the chain is on the cytoplasmic side. A helical transmembrane segment spans residues L444–L464. Over K465–S469 the chain is Extracellular. Residues V470–V490 form a helical membrane-spanning segment. Residues K491–V568 are Cytoplasmic-facing.

Belongs to the major facilitator superfamily. Sugar transporter (TC 2.A.1.1) family. In terms of assembly, homodimer.

The protein localises to the cell membrane. The enzyme catalyses D-glucose(out) = D-glucose(in). It catalyses the reaction D-fructose(out) = D-fructose(in). It carries out the reaction D-galactose(in) = D-galactose(out). The catalysed reaction is D-mannose(out) = D-mannose(in). The enzyme catalyses D-glucosamine(out) = D-glucosamine(in). It catalyses the reaction D-xylose(out) = D-xylose(in). Its activity is regulated as follows. Inhibited by cytochalasin B. Sodium-independent facilitative hexose transporter. Can transport D-glucose and D-mannose with high affinity, and D-fructose and D-galactose with low affinity. Can transport D-xylose and D-glucosamine. The protein is Hexose transporter 1 of Toxoplasma gondii.